The following is a 147-amino-acid chain: Phosphoribosyl-AMP cyclohydrolase 2 (147 aa).

Asp-99 is a binding site for Mg(2+). Residue Cys-100 coordinates Zn(2+). Positions 101 and 103 each coordinate Mg(2+). Zn(2+) contacts are provided by Cys-116 and Cys-123.

Belongs to the PRA-CH family. Homodimer. It depends on Mg(2+) as a cofactor. Zn(2+) serves as cofactor.

Its subcellular location is the cytoplasm. It catalyses the reaction 1-(5-phospho-beta-D-ribosyl)-5'-AMP + H2O = 1-(5-phospho-beta-D-ribosyl)-5-[(5-phospho-beta-D-ribosylamino)methylideneamino]imidazole-4-carboxamide. Its pathway is amino-acid biosynthesis; L-histidine biosynthesis; L-histidine from 5-phospho-alpha-D-ribose 1-diphosphate: step 3/9. Functionally, catalyzes the hydrolysis of the adenine ring of phosphoribosyl-AMP. The protein is Phosphoribosyl-AMP cyclohydrolase 2 of Pseudomonas fluorescens (strain ATCC BAA-477 / NRRL B-23932 / Pf-5).